The chain runs to 115 residues: MNIEVLKSKIHRVKVTQAELHYVGSITIDEALMEASNIIENEKVQIVNINNGERFETYVIKGEKNTGVICLNGPAARKVAVGDIVIVIAYASMDFEEAKKWKPTLIFPDANNRLI.

The active-site Schiff-base intermediate with substrate; via pyruvic acid is the Ser-25. Ser-25 is subject to Pyruvic acid (Ser). Thr-57 contacts substrate. Tyr-58 serves as the catalytic Proton donor. A substrate-binding site is contributed by 73–75 (GPA).

This sequence belongs to the PanD family. Heterooctamer of four alpha and four beta subunits. The cofactor is pyruvate. Post-translationally, is synthesized initially as an inactive proenzyme, which is activated by self-cleavage at a specific serine bond to produce a beta-subunit with a hydroxyl group at its C-terminus and an alpha-subunit with a pyruvoyl group at its N-terminus.

The protein resides in the cytoplasm. The catalysed reaction is L-aspartate + H(+) = beta-alanine + CO2. It functions in the pathway cofactor biosynthesis; (R)-pantothenate biosynthesis; beta-alanine from L-aspartate: step 1/1. Catalyzes the pyruvoyl-dependent decarboxylation of aspartate to produce beta-alanine. The protein is Aspartate 1-decarboxylase of Cytophaga hutchinsonii (strain ATCC 33406 / DSM 1761 / CIP 103989 / NBRC 15051 / NCIMB 9469 / D465).